Reading from the N-terminus, the 353-residue chain is Phosphate acyltransferase (353 aa).

This sequence belongs to the PlsX family. In terms of assembly, homodimer. Probably interacts with PlsY.

The protein resides in the cytoplasm. The catalysed reaction is a fatty acyl-[ACP] + phosphate = an acyl phosphate + holo-[ACP]. Its pathway is lipid metabolism; phospholipid metabolism. Functionally, catalyzes the reversible formation of acyl-phosphate (acyl-PO(4)) from acyl-[acyl-carrier-protein] (acyl-ACP). This enzyme utilizes acyl-ACP as fatty acyl donor, but not acyl-CoA. This chain is Phosphate acyltransferase, found in Ralstonia pickettii (strain 12J).